The sequence spans 386 residues: Cobalt-precorrin-5B C(1)-methyltransferase (386 aa).

The protein belongs to the CbiD family.

It carries out the reaction Co-precorrin-5B + S-adenosyl-L-methionine = Co-precorrin-6A + S-adenosyl-L-homocysteine. It participates in cofactor biosynthesis; adenosylcobalamin biosynthesis; cob(II)yrinate a,c-diamide from sirohydrochlorin (anaerobic route): step 6/10. Catalyzes the methylation of C-1 in cobalt-precorrin-5B to form cobalt-precorrin-6A. The sequence is that of Cobalt-precorrin-5B C(1)-methyltransferase from Prochlorococcus marinus (strain MIT 9303).